The chain runs to 466 residues: Muscarinic acetylcholine receptor M2 (466 aa).

The Extracellular portion of the chain corresponds to 1-22 (MNNSTNSSNNGLAITSPYKTFE). Residues Asn-2, Asn-3, and Asn-6 are each glycosylated (N-linked (GlcNAc...) asparagine). The helical transmembrane segment at 23–45 (VVFIVLVAGSLSLVTIIGNILVM) threads the bilayer. Topologically, residues 46 to 59 (VSIKVNRHLQTVNN) are cytoplasmic. A helical membrane pass occupies residues 60–80 (YFLFSLACADLIIGVFSMNLY). Topologically, residues 81–97 (TLYTVIGYWPLGPVVCD) are extracellular. Cys-96 and Cys-176 are disulfide-bonded. A helical transmembrane segment spans residues 98–119 (LWLALDYVVSNASVMNLLIISF). The Important for signaling signature appears at 120–122 (DRY). The Cytoplasmic segment spans residues 120-139 (DRYFCVTKPLTYPVKRTTKM). The chain crosses the membrane as a helical span at residues 140–162 (AGMMIAAAWVLSFILWAPAILFW). Residues 163–184 (QFIVGVRTVEDGECYIQFFSNA) lie on the Extracellular side of the membrane. Residues 185-209 (AVTFGTAIAAFYLPVIIMTVLYWHI) form a helical membrane-spanning segment. The Cytoplasmic segment spans residues 210 to 387 (SRASKSRIKK…PPSREKKVTR (178 aa)). The tract at residues 218–320 (KKEKKEPVAN…SLGHSKDDNS (103 aa)) is disordered. Ser-232 bears the Phosphoserine mark. Residues 254 to 270 (GLEHNKIQNGKAPRDGG) are compositionally biased toward basic and acidic residues. Polar residues-rich tracts occupy residues 284–293 (NDSTSVSAVA) and 304–313 (DENTVSTSLG). Residues 388 to 410 (TILAILLAFIITWAPYNVMVLIN) form a helical membrane-spanning segment. Residues 411–418 (TFCAPCIP) lie on the Extracellular side of the membrane. A disulfide bridge connects residues Cys-413 and Cys-416. Residues 419–442 (NTVWTIGYWLCYINSTINPACYAL) traverse the membrane as a helical segment. The Important for signaling signature appears at 436–440 (NPACY). At 443–466 (CNATFKKTFKHLLMCHYKNIGATR) the chain is on the cytoplasmic side. Phosphothreonine occurs at positions 446, 450, and 465.

It belongs to the G-protein coupled receptor 1 family. Muscarinic acetylcholine receptor subfamily. CHRM2 sub-subfamily. In terms of assembly, interacts with ARRB1 and ARRB2. Interacts with RACK1; the interaction regulates CHRM2 internalization. Phosphorylated in response to agonist treatment.

It localises to the cell membrane. The protein localises to the postsynaptic cell membrane. Functionally, the muscarinic acetylcholine receptor mediates various cellular responses, including inhibition of adenylate cyclase, breakdown of phosphoinositides and modulation of potassium channels through the action of G proteins. Primary transducing effect is adenylate cyclase inhibition. Signaling promotes phospholipase C activity, leading to the release of inositol trisphosphate (IP3); this then triggers calcium ion release into the cytosol. This chain is Muscarinic acetylcholine receptor M2 (Chrm2), found in Mus musculus (Mouse).